Consider the following 305-residue polypeptide: Probable lipid kinase YegS-like (305 aa).

The 129-residue stretch at 1–129 (MTQRRAMLIL…VDLGEVGGKL (129 aa)) folds into the DAGKc domain. ATP-binding positions include threonine 39, 65-71 (GDGTLRD), and threonine 92. 3 residues coordinate Mg(2+): leucine 210, aspartate 213, and leucine 215. Glutamate 268 functions as the Proton acceptor in the catalytic mechanism.

It belongs to the diacylglycerol/lipid kinase family. YegS lipid kinase subfamily. Mg(2+) serves as cofactor. Ca(2+) is required as a cofactor.

Its subcellular location is the cytoplasm. Its function is as follows. Probably phosphorylates lipids; the in vivo substrate is unknown. The protein is Probable lipid kinase YegS-like of Pseudomonas syringae pv. tomato (strain ATCC BAA-871 / DC3000).